The sequence spans 146 residues: Large ribosomal subunit protein uL23m (146 aa).

The tract at residues 108–146 (PDLFPEKEPTSPDPLEEELPQQRQSSDPRCPGIPSWFGL) is disordered.

This sequence belongs to the universal ribosomal protein uL23 family. As to quaternary structure, component of the mitochondrial ribosome large subunit (39S) which comprises a 16S rRNA and about 50 distinct proteins.

It localises to the mitochondrion. The polypeptide is Large ribosomal subunit protein uL23m (Mrpl23) (Rattus norvegicus (Rat)).